The chain runs to 640 residues: Chaperone protein DnaK (640 aa).

Thr-199 bears the Phosphothreonine; by autocatalysis mark. The segment at 603 to 640 (YAAGETESSAAEPGEPQEKTVDAEVVDAEFEEVKDDKK) is disordered. Residues 626 to 640 (EVVDAEFEEVKDDKK) show a composition bias toward acidic residues.

Belongs to the heat shock protein 70 family.

Its function is as follows. Acts as a chaperone. This is Chaperone protein DnaK from Methylobacillus flagellatus (strain ATCC 51484 / DSM 6875 / VKM B-1610 / KT).